The primary structure comprises 100 residues: Small ribosomal subunit protein uS14c (100 aa).

This sequence belongs to the universal ribosomal protein uS14 family. In terms of assembly, part of the 30S ribosomal subunit.

The protein resides in the plastid. The protein localises to the chloroplast. Binds 16S rRNA, required for the assembly of 30S particles. The polypeptide is Small ribosomal subunit protein uS14c (Chaetosphaeridium globosum (Charophycean green alga)).